The following is a 92-amino-acid chain: Large ribosomal subunit protein eL43 (92 aa).

The C4-type zinc-finger motif lies at 39–60 (CEFCGKYAVKRKAVGIWGCKAC).

The protein belongs to the eukaryotic ribosomal protein eL43 family.

In Gossypium hirsutum (Upland cotton), this protein is Large ribosomal subunit protein eL43 (RPL37A).